The sequence spans 613 residues: UBX domain-containing protein 3 (613 aa).

2 disordered regions span residues 67–223 and 453–472; these read PAAA…PINP and MNEQ…RNQQ. Low complexity predominate over residues 68-82; it reads AAASGRNAGASSSSR. The span at 137 to 149 shows a compositional bias: basic residues; the sequence is THHRGAAIPRQKR. A compositionally biased stretch (low complexity) spans 158-169; it reads SSSGSSSASFSS. Residues 452-517 adopt a coiled-coil conformation; sequence RMNEQSERRE…EEEECVRRQT (66 aa). Residues 531-610 form the UBX domain; that stretch reads PLAEIINVKF…KWPAREQIFV (80 aa). The Interaction with cdc-48 signature appears at 582–584; it reads FPK.

Forms a complex composed of ubxn-3, cdc-48.1, ufd-1 and npl-4.1. Forms a complex composed of ubxn-3, cdc-48.1 and/or cdc-48.2 and substrate cdt-1. Interacts (via FPK motif) with cdc-48.1 (via N-terminus) and cdc-48.2 (via N-terminus). Interacts (via N-terminus) with cdt-1 and ubiquitinated protein substrates; the interaction is cdc-48-independent. May interact with npl-4.1. Expressed in the germline (at protein level). Expressed in spermatocytes but not in mature sperm (at protein level). Expressed in the spermatheca and nerve cells.

It localises to the nucleus. It is found in the cytoplasm. The protein resides in the perinuclear region. Its subcellular location is the chromosome. Functionally, ubiquitin-binding protein which acts as an adapter for ATPase cdc-48.1 and/or cdc-48.2, conferring substrate specificity. Together with ubxn-1 and ubxn-2, plays a role in hermaphrodite spermatogenesis probably by promoting the degradation of sex determination terminal factor tra-1. During mitosis, ensures the degradation of DNA licensing factor cdt-1 and the disassembly of the DNA replication CMG helicase complex by promoting the dissociation from chromatin of several of its components including cdc-45 and sld-5. In Caenorhabditis elegans, this protein is UBX domain-containing protein 3.